A 1155-amino-acid chain; its full sequence is ATP-dependent helicase/deoxyribonuclease subunit B (1155 aa).

The 278-residue stretch at Met-1 to Arg-278 folds into the UvrD-like helicase ATP-binding domain. Gly-9–Ser-16 provides a ligand contact to ATP. The UvrD-like helicase C-terminal domain occupies Thr-270 to Val-584. Residues Cys-785, Cys-1112, Cys-1115, and Cys-1121 each coordinate [4Fe-4S] cluster.

This sequence belongs to the helicase family. AddB/RexB type 1 subfamily. As to quaternary structure, heterodimer of AddA and AddB. Mg(2+) is required as a cofactor. [4Fe-4S] cluster serves as cofactor.

The heterodimer acts as both an ATP-dependent DNA helicase and an ATP-dependent, dual-direction single-stranded exonuclease. Recognizes the chi site generating a DNA molecule suitable for the initiation of homologous recombination. The AddB subunit has 5' -&gt; 3' nuclease activity but not helicase activity. This Staphylococcus carnosus (strain TM300) protein is ATP-dependent helicase/deoxyribonuclease subunit B.